The primary structure comprises 427 residues: Trigger factor (427 aa).

A PPIase FKBP-type domain is found at 163-248 (GDTVVIDFVG…IHEVKAKEVP (86 aa)).

Belongs to the FKBP-type PPIase family. Tig subfamily.

Its subcellular location is the cytoplasm. It catalyses the reaction [protein]-peptidylproline (omega=180) = [protein]-peptidylproline (omega=0). In terms of biological role, involved in protein export. Acts as a chaperone by maintaining the newly synthesized protein in an open conformation. Functions as a peptidyl-prolyl cis-trans isomerase. The protein is Trigger factor of Streptococcus pneumoniae serotype 2 (strain D39 / NCTC 7466).